The sequence spans 471 residues: Phosphatidylserine synthase 2 (471 aa).

Positions Met-1–Glu-26 are disordered. Topologically, residues Met-1–Arg-40 are cytoplasmic. A phosphoserine mark is found at Ser-12, Ser-14, and Ser-16. A helical transmembrane segment spans residues Ala-41 to Glu-61. At Glu-62–Gly-74 the chain is on the lumenal side. A helical transmembrane segment spans residues Ile-75–Phe-95. Over Ser-96–Arg-104 the chain is Cytoplasmic. The chain crosses the membrane as a helical span at residues Phe-105 to Val-125. At His-126 to Arg-291 the chain is on the lumenal side. An N-linked (GlcNAc...) asparagine glycan is attached at Asn-159. A helical membrane pass occupies residues Trp-292–Leu-312. Position 313 (Lys-313) is a topological domain, cytoplasmic. The helical transmembrane segment at Phe-314 to Asn-334 threads the bilayer. The Lumenal portion of the chain corresponds to Val-335–Arg-354. The chain crosses the membrane as a helical span at residues Lys-355–Val-375. At Lys-376–Thr-381 the chain is on the cytoplasmic side. A helical transmembrane segment spans residues Leu-382 to Leu-402. At Thr-403–Ser-471 the chain is on the lumenal side. Residues Arg-423–Ser-471 form a disordered region.

It belongs to the phosphatidyl serine synthase family.

Its subcellular location is the endoplasmic reticulum membrane. It catalyses the reaction a 1,2-diacyl-sn-glycero-3-phosphoethanolamine + L-serine = a 1,2-diacyl-sn-glycero-3-phospho-L-serine + ethanolamine. It carries out the reaction 1-hexadecanoyl-2-(9Z-octadecenoyl)-sn-glycero-3-phosphoethanolamine + L-serine = 1-hexadecanoyl-2-(9Z-octadecenoyl)-sn-glycero-3-phospho-L-serine + ethanolamine. The enzyme catalyses 1-hexadecanoyl-2-(4Z,7Z,10Z,13Z,16Z,19Z-docosahexaenoyl)-sn-glycero-3-phosphoethanolamine + L-serine = 1-hexadecanoyl-2-(4Z,7Z,10Z,13Z,16Z,19Z-docosahexaenoyl)-sn-glycero-3-phosphoserine + ethanolamine. The catalysed reaction is 1-octadecanoyl-2-(5Z,8Z,11Z,14Z)-eicosatetraenoyl-sn-glycero-3-phosphoethanolamine + L-serine = 1-octadecanoyl-2-(5Z,8Z,11Z,14Z)-eicosatetraenoyl-sn-glycero-3-phosphoserine + ethanolamine. It catalyses the reaction 1-octadecanoyl-2-(4Z,7Z,10Z,13Z,16Z,19Z-docosahexaenoyl)-sn-glycero-3-phosphoethanolamine + L-serine = 1-octadecanoyl-2-(4Z,7Z,10Z,13Z,16Z,19Z-docosahexaenoyl)-sn-glycero-3-phosphoserine + ethanolamine. It carries out the reaction 1-(1Z-octadecenyl)-2-(4Z,7Z,10Z,13Z,16Z,19Z-docosahexaenoyl)-sn-glycero-3-phosphoethanolamine + L-serine = 1-(1Z-octadecenyl)-2-(4Z,7Z,10Z,13Z,16Z,19Z-docosahexaenoyl)-sn-glycero-3-phospho-L-serine + ethanolamine. The enzyme catalyses 1-octadecanoyl-2-(9Z-octadecenoyl)-sn-glycero-3-phosphoethanolamine + L-serine = 1-octadecanoyl-2-(9Z-octadecenoyl)-sn-glycero-3-phospho-L-serine + ethanolamine. The catalysed reaction is 1-(1Z-octadecenyl)-2-(9Z-octadecenoyl)-sn-glycero-3-phosphoethanolamine + L-serine = 1-(1Z-octadecenyl)-2-(9Z-octadecenoyl)-sn-glycero-3-phospho-L-serine + ethanolamine. It catalyses the reaction 1-(1Z-octadecenyl)-2-(5Z,8Z,11Z,14Z- eicosatetraenoyl)-sn-glycero-3-phosphoethanolamine + L-serine = 1-(1Z-octadecenyl)-2-(5Z,8Z,11Z,14Z-eicosatetraenoyl)-sn-glycero-3-phospho-L-serine + ethanolamine. It participates in phospholipid metabolism; phosphatidylserine biosynthesis. Its function is as follows. Catalyzes a base-exchange reaction in which the polar head group of phosphatidylethanolamine (PE) or phosphatidylcholine (PC) is replaced by L-serine. Catalyzes the conversion of phosphatatidylethanolamine and does not act on phosphatidylcholine. Can utilize both phosphatidylethanolamine (PE) plasmalogen and diacyl PE as substrate and the latter is six times better utilized, indicating the importance of an ester linkage at the sn-1 position. Although it shows no sn-1 fatty acyl preference, exhibits significant preference towards docosahexaenoic acid (22:6n-3) compared with 18:1 or 20:4 at the sn-2 position. This is Phosphatidylserine synthase 2 (Ptdss2) from Rattus norvegicus (Rat).